The following is a 183-amino-acid chain: Oligoribonuclease (183 aa).

In terms of domain architecture, Exonuclease spans 8–171 (LIWLDMEMTG…ADIRESIAEL (164 aa)). Y129 is an active-site residue.

Belongs to the oligoribonuclease family.

The protein localises to the cytoplasm. Functionally, 3'-to-5' exoribonuclease specific for small oligoribonucleotides. The polypeptide is Oligoribonuclease (Aromatoleum aromaticum (strain DSM 19018 / LMG 30748 / EbN1) (Azoarcus sp. (strain EbN1))).